The sequence spans 345 residues: Dihydroorotase (345 aa).

Positions 13 and 15 each coordinate Zn(2+). Substrate is bound by residues 15-17 (HFR) and asparagine 41. Lysine 98, histidine 135, and histidine 173 together coordinate Zn(2+). Lysine 98 is modified (N6-carboxylysine). Residue histidine 135 coordinates substrate. Leucine 218 lines the substrate pocket. Aspartate 246 provides a ligand contact to Zn(2+). Residue aspartate 246 is part of the active site. Substrate is bound by residues histidine 250 and alanine 262.

This sequence belongs to the metallo-dependent hydrolases superfamily. DHOase family. Class II DHOase subfamily. As to quaternary structure, homodimer. The cofactor is Zn(2+).

It catalyses the reaction (S)-dihydroorotate + H2O = N-carbamoyl-L-aspartate + H(+). It participates in pyrimidine metabolism; UMP biosynthesis via de novo pathway; (S)-dihydroorotate from bicarbonate: step 3/3. Functionally, catalyzes the reversible cyclization of carbamoyl aspartate to dihydroorotate. The sequence is that of Dihydroorotase from Shewanella piezotolerans (strain WP3 / JCM 13877).